A 1010-amino-acid polypeptide reads, in one-letter code: 2-oxoglutarate dehydrogenase-like, mitochondrial (1010 aa).

The N-terminal 107 residues, 1–107 (MSQLRLLLFR…RASVSSCTKT (107 aa)), are a transit peptide targeting the mitochondrion. The segment at 28–47 (GGRRRSSGPPTTIPRSRGGV) is disordered. Positions 130, 143, and 145 each coordinate Ca(2+). Thiamine diphosphate contacts are provided by arginine 299, aspartate 398, asparagine 431, isoleucine 433, and glutamine 663. 3 residues coordinate Mg(2+): aspartate 398, asparagine 431, and isoleucine 433.

Belongs to the alpha-ketoglutarate dehydrogenase family. As to quaternary structure, the OGDHC complex comprises multiple copies of three catalytic enzyme components, the 2-oxoglutarate dehydrogenase (OGDH/E1), the dihydrolipoamide dehydrogenase (DLST/E2) and the dihydrolipoamide dehydrogenase (DLD/E3). OGDHL/E1-like isoenzyme may replace OGDH in the OGDHC complex in the brain. The presence of either ODGH/E1 or ODGHL/E1-like isoenzyme in the complex may depend on its tissular distribution. The cofactor is thiamine diphosphate. Mg(2+) is required as a cofactor. In terms of tissue distribution, the OGDHL-containing OGDHC complex is present in the brain, but not in the heart.

The protein localises to the mitochondrion matrix. It catalyses the reaction N(6)-[(R)-lipoyl]-L-lysyl-[protein] + 2-oxoglutarate + H(+) = N(6)-[(R)-S(8)-succinyldihydrolipoyl]-L-lysyl-[protein] + CO2. Its function is as follows. 2-oxoglutarate dehydrogenase (E1-like) component of the 2-oxoglutarate dehydrogenase multienzyme complex (OGDHC) which mediates the decarboxylation of alpha-ketoglutarate in the tricarboxylic acid cycle. The OGDHC complex catalyzes the overall conversion of 2-oxoglutarate to succinyl-CoA and CO(2) while reducing NAD(+) to NADH. The OGDHC complex is mainly active in the mitochondrion. Involved in the inhibition of cell proliferation and in apoptosis. This chain is 2-oxoglutarate dehydrogenase-like, mitochondrial, found in Rattus norvegicus (Rat).